The chain runs to 406 residues: Probable mannan endo-1,4-beta-mannosidase C (406 aa).

The N-terminal stretch at 1-20 is a signal peptide; sequence MLINFEKVLSLALLAGSVSG. The N-linked (GlcNAc...) asparagine glycan is linked to N58. Substrate is bound at residue W80. N-linked (GlcNAc...) asparagine glycans are attached at residues N86 and N114. N201 is a binding site for substrate. E202 serves as the catalytic Proton donor. Y287 is a binding site for substrate. The active-site Nucleophile is E320. N338 carries N-linked (GlcNAc...) asparagine glycosylation. W362 lines the substrate pocket.

Belongs to the glycosyl hydrolase 5 (cellulase A) family.

Its subcellular location is the secreted. The enzyme catalyses Random hydrolysis of (1-&gt;4)-beta-D-mannosidic linkages in mannans, galactomannans and glucomannans.. Endo-1,4-mannanase, a crucial enzyme for depolymerization of seed galactomannans and wood galactoglucomannans. The chain is Probable mannan endo-1,4-beta-mannosidase C (manC) from Aspergillus terreus (strain NIH 2624 / FGSC A1156).